The sequence spans 404 residues: MQPTYKNKKFIDDIDFLNKTVILRVDFNVPIKNGEISSIKRIIASLKTIKKIVNNGGKLVILSHLGRIKSKEDLPKKSLRIVAEKLAEILGQEIKFIPENRGPKVENAISQLEKGEILVLENTRFQDLNNKAESKNDAELGRYWASLGDVFINDAFGTLHRAHGSNVGIATYIKESAIGYLVKEELDALSKLIFSPQRPFYAIIGGAKISDKIGIISTLLEKADKVLIGGGMAYTFKKALGYKIGLSIYEDDKLELAASLVKKYPDKLILALDAALAPEFADLEPLYNQENPLEIPDHLEGMDIGPLTIELFKDHLKDGKTILWNGTLGVAEFKNFARGTKEVAKIIANLKECYSIIGGGDSIAAIEAEGLSNSFSHISTGGGASISFIENGDLIGLGPIQEKD.

Residues 26 to 28, arginine 41, 64 to 67, arginine 124, and arginine 161 contribute to the substrate site; these read DFN and HLGR. Residues lysine 212, glycine 301, glutamate 332, and 359 to 362 each bind ATP; that span reads GGDS.

The protein belongs to the phosphoglycerate kinase family. Monomer.

The protein localises to the cytoplasm. It catalyses the reaction (2R)-3-phosphoglycerate + ATP = (2R)-3-phospho-glyceroyl phosphate + ADP. It participates in carbohydrate degradation; glycolysis; pyruvate from D-glyceraldehyde 3-phosphate: step 2/5. The sequence is that of Phosphoglycerate kinase from Mesomycoplasma hyopneumoniae (strain 232) (Mycoplasma hyopneumoniae).